The primary structure comprises 206 residues: MPTLEGIDLTCIRGDRKLFSGVNFLLESGGLMQVQGPNGSGKTSLLRMLCGLASPAEGEIRWDGTQIRSLGGDYFGAMTYLGHLGGVKDDLTAIENLRISSALGGVDLDERKAHDALQHMGLGGRELLPAKVLSQGQRRRVTLARLLVCGTVLWILDEPLTALDTSAVKLVQGLIERHLEHGGMIVMTTHQEIEIAGAAIQRLQLT.

The ABC transporter domain occupies 4–205 (LEGIDLTCIR…AGAAIQRLQL (202 aa)). Residue 36–43 (GPNGSGKT) coordinates ATP.

The protein belongs to the ABC transporter superfamily. CcmA exporter (TC 3.A.1.107) family. As to quaternary structure, the complex is composed of two ATP-binding proteins (CcmA) and two transmembrane proteins (CcmB).

The protein localises to the cell inner membrane. The enzyme catalyses heme b(in) + ATP + H2O = heme b(out) + ADP + phosphate + H(+). Its function is as follows. Part of the ABC transporter complex CcmAB involved in the biogenesis of c-type cytochromes; once thought to export heme, this seems not to be the case, but its exact role is uncertain. Responsible for energy coupling to the transport system. The sequence is that of Cytochrome c biogenesis ATP-binding export protein CcmA from Nitrosospira multiformis (strain ATCC 25196 / NCIMB 11849 / C 71).